The chain runs to 177 residues: Large ribosomal subunit protein uL6 (177 aa).

Belongs to the universal ribosomal protein uL6 family. Part of the 50S ribosomal subunit.

This protein binds to the 23S rRNA, and is important in its secondary structure. It is located near the subunit interface in the base of the L7/L12 stalk, and near the tRNA binding site of the peptidyltransferase center. This chain is Large ribosomal subunit protein uL6, found in Pseudomonas syringae pv. tomato (strain ATCC BAA-871 / DC3000).